The sequence spans 63 residues: uncharacterized protein (63 aa).

This is an uncharacterized protein from Orgyia pseudotsugata (Douglas-fir tussock moth).